The sequence spans 218 residues: Probable chemoreceptor glutamine deamidase CheD (218 aa).

It belongs to the CheD family.

The enzyme catalyses L-glutaminyl-[protein] + H2O = L-glutamyl-[protein] + NH4(+). In terms of biological role, probably deamidates glutamine residues to glutamate on methyl-accepting chemotaxis receptors (MCPs), playing an important role in chemotaxis. The protein is Probable chemoreceptor glutamine deamidase CheD of Saccharophagus degradans (strain 2-40 / ATCC 43961 / DSM 17024).